Here is an 883-residue protein sequence, read N- to C-terminus: Putative GTP diphosphokinase RSH1, chloroplastic (883 aa).

A chloroplast-targeting transit peptide spans 1–55 (MTSASSMSVSVECVNICNLTKGDGNARSDCSALSCAWKAPRALTGFLASTAHPPV). The region spanning 172 to 279 (FIIHPVAVAR…VKLADRLHNM (108 aa)) is the HD domain. A TGS domain is found at 562-625 (LGSRVFVFTP…ENAEVVEIVT (64 aa)). The span at 710–726 (QSQDKSRDTTPAPQNGS) shows a compositional bias: polar residues. The segment at 710–746 (QSQDKSRDTTPAPQNGSVWAPKVNGKHNKAIKNSSSD) is disordered. The ACT domain maps to 796 to 867 (WLCVVSMDRK…LVLGVLGWSS (72 aa)).

Belongs to the RelA/SpoT family. As to quaternary structure, interacts with RPP5.

The protein localises to the plastid. It is found in the chloroplast. The enzyme catalyses GTP + ATP = guanosine 3'-diphosphate 5'-triphosphate + AMP. Functionally, may be involved in a rapid plant ppGpp (guanosine 3'-diphosphate 5'-diphosphate)-mediated response to pathogens and other stresses. This Arabidopsis thaliana (Mouse-ear cress) protein is Putative GTP diphosphokinase RSH1, chloroplastic (RSH1).